A 111-amino-acid polypeptide reads, in one-letter code: Entry-fusion complex protein OPG086 (111 aa).

A helical; Signal-anchor membrane pass occupies residues 1–21; it reads MASLLYFILFLLFVCISYYFT. At 22–111 the chain is on the virion surface side; it reads YYPTNKLQAA…TLLPILLLSK (90 aa).

It belongs to the orthopoxvirus OPG086 family. In terms of assembly, interacts with OPG099/L5. Component of the entry fusion complex (EFC) composed of OPG053, OPG076, OPG086, OPG094, OPG095, OPG099, OPG107, OPG143, OPG104, OPG147 and OPG155. Except for OPG095 and OPG053, each of the EFC proteins is required for assembly or stability of the complex. Unglycosylated because produced in viral factories instead of the classic ER -Golgi route.

The protein localises to the virion membrane. In terms of biological role, component of the entry fusion complex (EFC), which consists of 11 proteins. During cell infection, this complex mediates entry of the virion core into the host cytoplasm by a two-step mechanism consisting of lipid mixing of the viral and cellular membranes and subsequent pore formation. The sequence is that of Entry-fusion complex protein OPG086 (OPG086) from Variola virus (isolate Human/India/Ind3/1967) (VARV).